Here is a 406-residue protein sequence, read N- to C-terminus: Putative phosphate permease PH0640 (406 aa).

Transmembrane regions (helical) follow at residues 2-22 (IPID…AWAI), 45-65 (AVLI…KTVT), 83-103 (VLIY…IIAT), 114-134 (SIIG…IVNW), 140-160 (VVLS…LVFR), 182-202 (FWIG…VLHG), 207-227 (IGIL…TSML), 265-285 (VANA…GLAG), 288-308 (VPVP…GVAT), 330-350 (FTID…GMPI), and 385-405 (FVTV…LLLI).

It belongs to the inorganic phosphate transporter (PiT) (TC 2.A.20) family.

The protein localises to the cell membrane. Its function is as follows. Potential transporter for phosphate. In Pyrococcus horikoshii (strain ATCC 700860 / DSM 12428 / JCM 9974 / NBRC 100139 / OT-3), this protein is Putative phosphate permease PH0640.